Consider the following 499-residue polypeptide: Lysine--tRNA ligase (499 aa).

Mg(2+) contacts are provided by E408 and E415.

This sequence belongs to the class-II aminoacyl-tRNA synthetase family. As to quaternary structure, homodimer. Requires Mg(2+) as cofactor.

The protein localises to the cytoplasm. The enzyme catalyses tRNA(Lys) + L-lysine + ATP = L-lysyl-tRNA(Lys) + AMP + diphosphate. In Bacillus thuringiensis (strain Al Hakam), this protein is Lysine--tRNA ligase.